The following is a 501-amino-acid chain: Ammonium transporter 2 member 2 (501 aa).

11 helical membrane passes run 35–55 (VAATFVGIQSMPGLVVIYGSI), 64–84 (SAFMALYAYASTLIVWVLVGF), 140–160 (LVLFEFEFAAITLVLLAGSLL), 174–194 (LWLLFSYTVGAFSLWGGGFLY), 203–223 (GGYVIHLSSGVAGFTAAYWVG), 238–258 (ILLMIAGGGLLWLGWAGFNGG), 274–294 (TNVSAATSLLTWTCLDVIFFG), 298–318 (VIGAVQGMMTGLVCITPGAGL), 322–342 (WSAMLMGMFAGSVPWFTMMIL), 356–376 (LAVFHTHAVAGILGGVLTGLL), and 412–432 (FVTVWNLIVTSAILLCIGLFI).

Belongs to the ammonia transporter channel (TC 1.A.11.2) family.

Its subcellular location is the membrane. Functionally, involved in ammonium transport. The sequence is that of Ammonium transporter 2 member 2 (AMT2-2) from Oryza sativa subsp. japonica (Rice).